We begin with the raw amino-acid sequence, 365 residues long: Protein RecA (365 aa).

Position 77-84 (77-84) interacts with ATP; that stretch reads GPESSGKT.

The protein belongs to the RecA family.

It is found in the cytoplasm. Can catalyze the hydrolysis of ATP in the presence of single-stranded DNA, the ATP-dependent uptake of single-stranded DNA by duplex DNA, and the ATP-dependent hybridization of homologous single-stranded DNAs. It interacts with LexA causing its activation and leading to its autocatalytic cleavage. The sequence is that of Protein RecA from Mesorhizobium japonicum (strain LMG 29417 / CECT 9101 / MAFF 303099) (Mesorhizobium loti (strain MAFF 303099)).